A 68-amino-acid polypeptide reads, in one-letter code: Conotoxin Mr3.4 (68 aa).

The first 19 residues, 1–19 (MSKLGVLLTICLLLFPLTA), serve as a signal peptide directing secretion. Residues 20–49 (VPLDGDQPADRPAERMQDDISSERHPFFDR) constitute a propeptide that is removed on maturation. Disulfide bonds link Cys53–Cys67, Cys54–Cys63, and Cys59–Cys66. Pro65 is modified (4-hydroxyproline).

It belongs to the conotoxin M superfamily. Expressed by the venom duct.

It is found in the secreted. This chain is Conotoxin Mr3.4, found in Conus marmoreus (Marble cone).